Consider the following 415-residue polypeptide: Gamma-glutamyl phosphate reductase (415 aa).

Belongs to the gamma-glutamyl phosphate reductase family.

Its subcellular location is the cytoplasm. It catalyses the reaction L-glutamate 5-semialdehyde + phosphate + NADP(+) = L-glutamyl 5-phosphate + NADPH + H(+). It participates in amino-acid biosynthesis; L-proline biosynthesis; L-glutamate 5-semialdehyde from L-glutamate: step 2/2. Its function is as follows. Catalyzes the NADPH-dependent reduction of L-glutamate 5-phosphate into L-glutamate 5-semialdehyde and phosphate. The product spontaneously undergoes cyclization to form 1-pyrroline-5-carboxylate. This Parabacteroides distasonis (strain ATCC 8503 / DSM 20701 / CIP 104284 / JCM 5825 / NCTC 11152) protein is Gamma-glutamyl phosphate reductase.